We begin with the raw amino-acid sequence, 340 residues long: Annexin A2-A (340 aa).

Residues Ala-2–Leu-25 are P10 binding site. Annexin repeat units lie at residues Phe-34–Lys-105, Thr-106–Lys-177, Glu-190–Gln-262, and Asn-266–Gly-337.

It belongs to the annexin family. Tetramer of 2 light chains (p10 proteins) and 2 heavy chains (p36 proteins).

The protein resides in the secreted. It localises to the extracellular space. Its subcellular location is the extracellular matrix. It is found in the basement membrane. Calcium-regulated membrane-binding protein whose affinity for calcium is greatly enhanced by anionic phospholipids. It binds two calcium ions with high affinity. The protein is Annexin A2-A (anxa2-a) of Xenopus laevis (African clawed frog).